The primary structure comprises 576 residues: MEGKARITPQGEAAGTATTASVPGTTTDGMDPGVVATTSVVTTENASTSVATAGIGGPPQQVDQQETWRTNFYYNDVFTWSVADAPGSILYTVQHSPQNNPFTAVLSQMYAGWAGGMQFRFIVAGSGVFGGRLVAAVIPPGIEIGPGLEVRQFPHVVIDARSLEPVTITMPDLRPNMYHPTGDPGLVPTLVLSVYNNLINPFGGSTSAIQVTVETRPSEDFEFVMIRAPSSKTVDSVTPAGLLTTPVLTGVGTDNRWNCQIVGLQPVPGGLSTCNRHWNLNGSTYGWSSPRFTDIDHRRGASQPGGNNVLQFWYANAGSAVDNPICQVAPDGFPDMSFVPLNGPNVPTAGWVGFGAIWNSNSGAPNVTTVQAYELGFATGAPNNLQPATNTSGSQIVAKSIYAVSTGANQNPAGLFVMASGVISTPTARAITYTPQPDRIVNAPGTPAAAPVGKNVPIMFASVVRRTGDVNAEAGSDNGTQYGTGSQPLPVTIGLSLNNYSSALTPGQFFVWQLNFASGFMEIGLNVDGYFYAGTGASTTLIDLTELIDIRPVGPRPSTSTLVFNLGGATSGFSYV.

Positions 1-31 are disordered; it reads MEGKARITPQGEAAGTATTASVPGTTTDGMD. Residues 13 to 29 are compositionally biased toward low complexity; the sequence is AAGTATTASVPGTTTDG.

This sequence belongs to the caliciviridae capsid protein family. As to quaternary structure, homodimerizes, then multimerizes. Binds to histo-blood group antigens at surface of target cells. The N-terminus is blocked.

Its subcellular location is the virion. The protein resides in the host cytoplasm. In terms of biological role, capsid protein VP60 self assembles to form an icosahedral capsid with a T=3 symmetry, about 35 nm in diameter, and consisting of 180 capsid proteins. A smaller form of capsid with a diameter of 23 nm might be capsid proteins assembled as icosahedron with T=1 symmetry. The capsid encapsulate VP2 proteins and genomic or subgenomic RNA. Attaches virion to target cells by binding histo-blood group antigens, inducing endocytosis of the viral particle. Acidification of the endosome induces conformational change of capsid protein thereby injecting virus genomic RNA into host cytoplasm. This Oryctolagus cuniculus (Rabbit) protein is Subgenomic capsid protein VP60.